Consider the following 189-residue polypeptide: dCTP deaminase (189 aa).

Residues 112-117, 136-138, Gln157, Tyr171, and Gln181 each bind dCTP; these read KSTYAR and TLE. Glu138 functions as the Proton donor/acceptor in the catalytic mechanism.

The protein belongs to the dCTP deaminase family. Homotrimer.

The enzyme catalyses dCTP + H2O + H(+) = dUTP + NH4(+). It functions in the pathway pyrimidine metabolism; dUMP biosynthesis; dUMP from dCTP (dUTP route): step 1/2. Functionally, catalyzes the deamination of dCTP to dUTP. This Acinetobacter baylyi (strain ATCC 33305 / BD413 / ADP1) protein is dCTP deaminase.